The primary structure comprises 265 residues: Novel plant SNARE 11 (265 aa).

Residues 1–215 (MDPISAVSEE…IGRQVATDKC (215 aa)) lie on the Cytoplasmic side of the membrane. Residues 30-75 (QKLEKIKDANRQSRQLEELTDKMRDCKSLIKDFDREIKSLESGNDA) are a coiled coil. Positions 144–206 (NSMMDDTDQA…KKASKLVKEI (63 aa)) constitute a t-SNARE coiled-coil homology domain. The chain crosses the membrane as a helical; Anchor for type IV membrane protein span at residues 216 to 236 (IMAFLFLIVIGVIAIIIVKIV). Residues 237–265 (NPNNKDIRDIPGVGLAPPAMNRRLLWNHY) lie on the Vesicular side of the membrane.

The protein belongs to the novel plant SNARE family. In terms of assembly, interacts with KNOLLE to form a t-SNARE complex. Does not interact with SYP21, VTI12 or VPS45. As to expression, expressed in roots, stems, flower, siliques, expanding leaves, but not in mature leaves. Not limited to dividing cells.

Its subcellular location is the membrane. Functionally, t-SNARE involved in diverse vesicle trafficking and membrane fusion processes, including cell plate formation. The chain is Novel plant SNARE 11 (NPSN11) from Arabidopsis thaliana (Mouse-ear cress).